Consider the following 211-residue polypeptide: 3-demethoxyubiquinol 3-hydroxylase (211 aa).

Residues 22 to 43 (KHPLNPNRKSPSANTVDGQLSD) are disordered. Positions 28-42 (NRKSPSANTVDGQLS) are enriched in polar residues. 6 residues coordinate Fe cation: Glu60, Glu90, His93, Glu142, Glu174, and His177.

Belongs to the COQ7 family. The cofactor is Fe cation.

It is found in the cell membrane. The enzyme catalyses a 5-methoxy-2-methyl-3-(all-trans-polyprenyl)benzene-1,4-diol + AH2 + O2 = a 3-demethylubiquinol + A + H2O. The protein operates within cofactor biosynthesis; ubiquinone biosynthesis. In terms of biological role, catalyzes the hydroxylation of 2-nonaprenyl-3-methyl-6-methoxy-1,4-benzoquinol during ubiquinone biosynthesis. This is 3-demethoxyubiquinol 3-hydroxylase from Francisella philomiragia subsp. philomiragia (strain ATCC 25017 / CCUG 19701 / FSC 153 / O#319-036).